A 1285-amino-acid chain; its full sequence is ABC-type transporter fsqE (1285 aa).

The ABC transmembrane type-1 1 domain maps to 54-343; sequence VSSICAVLAG…IAPSAQALLS (290 aa). Transmembrane regions (helical) follow at residues 57-77, 102-122, 176-196, 203-223, 281-301, and 312-332; these read ICAVLAGALNPLVPVIYGLLV, LYYVYLSIGLFAFTYVATVGF, LAVMLTAIATFCAAFVVAFIM, IISPFFVIMIVTETLGGAYMV, VAGMIAWMNAMPNLIYALAFW, and MSVAEVSATTLAVTIGSFAII. Residues 380–622 enclose the ABC transporter 1 domain; it reads LDRVGLIYPS…NGAYAALVQK (243 aa). 413 to 420 is a binding site for ATP; that stretch reads GSSGSGKS. An N-linked (GlcNAc...) asparagine glycan is attached at N467. The interval 627 to 654 is disordered; the sequence is DTHDHKAPDGARLSIEDDDDEDSRYGGN. Transmembrane regions (helical) follow at residues 707-727, 753-773, 831-851, 855-875, 931-951, and 968-988; these read LFGLANAILAGLTIPVQSVFF, GLYVMLTGTTFLFWMGVEIAL, GILTFLSTILAGIVLALAIGW, LVCTATIPIVVACGWLRLQVL, ILLASALYAASASVVYLCAAL, and FQVYICFVSLISGSQIAGSIF. Residues 713–996 enclose the ABC transmembrane type-1 2 domain; it reads AILAGLTIPV…IFTYAPDASK (284 aa). N-linked (GlcNAc...) asparagine glycosylation is present at N1037. The ABC transporter 2 domain occupies 1043 to 1281; the sequence is VEFEHVSFTY…RGKYWEMVSM (239 aa). Residue 1078–1085 coordinates ATP; that stretch reads GQSGSGKS. A glycan (N-linked (GlcNAc...) asparagine) is linked at N1138.

It belongs to the ABC transporter superfamily. ABCB family. Multidrug resistance exporter (TC 3.A.1.201) subfamily.

The protein localises to the membrane. The protein operates within secondary metabolite biosynthesis. In terms of biological role, ABC-type transporter; part of the gene cluster that mediates the biosynthesis of the isoquinoline alkaloids fumisoquin A, fumisoquin B and fumisoquin C; as well as small amounts of fumipyrrole as a shunt metabolite. The products of the cluster lead to a brown coloration and are important for growth and conidiation. FsqE possibly plays a role of self-protection. This Aspergillus fumigatus (strain ATCC MYA-4609 / CBS 101355 / FGSC A1100 / Af293) (Neosartorya fumigata) protein is ABC-type transporter fsqE.